The chain runs to 339 residues: Ketol-acid reductoisomerase (NADP(+)) (339 aa).

Residues 1-182 (MRVYYDRDAD…GGGRSGVIET (182 aa)) enclose the KARI N-terminal Rossmann domain. Residues 24 to 27 (YGSQ), R48, S51, T53, and 83 to 86 (DELQ) each bind NADP(+). H108 is an active-site residue. G134 is an NADP(+) binding site. One can recognise a KARI C-terminal knotted domain in the interval 183 to 328 (TFKEECETDL…GKLRAMMPWI (146 aa)). Residues D191, E195, E227, and E231 each contribute to the Mg(2+) site. Position 252 (S252) interacts with substrate.

This sequence belongs to the ketol-acid reductoisomerase family. It depends on Mg(2+) as a cofactor.

It catalyses the reaction (2R)-2,3-dihydroxy-3-methylbutanoate + NADP(+) = (2S)-2-acetolactate + NADPH + H(+). The enzyme catalyses (2R,3R)-2,3-dihydroxy-3-methylpentanoate + NADP(+) = (S)-2-ethyl-2-hydroxy-3-oxobutanoate + NADPH + H(+). Its pathway is amino-acid biosynthesis; L-isoleucine biosynthesis; L-isoleucine from 2-oxobutanoate: step 2/4. The protein operates within amino-acid biosynthesis; L-valine biosynthesis; L-valine from pyruvate: step 2/4. In terms of biological role, involved in the biosynthesis of branched-chain amino acids (BCAA). Catalyzes an alkyl-migration followed by a ketol-acid reduction of (S)-2-acetolactate (S2AL) to yield (R)-2,3-dihydroxy-isovalerate. In the isomerase reaction, S2AL is rearranged via a Mg-dependent methyl migration to produce 3-hydroxy-3-methyl-2-ketobutyrate (HMKB). In the reductase reaction, this 2-ketoacid undergoes a metal-dependent reduction by NADPH to yield (R)-2,3-dihydroxy-isovalerate. In Brucella canis (strain ATCC 23365 / NCTC 10854 / RM-666), this protein is Ketol-acid reductoisomerase (NADP(+)).